Consider the following 377-residue polypeptide: Chaperone protein DnaJ (377 aa).

Residues 5–70 form the J domain; it reads DYYEILGVAK…QKRAAYDQFG (66 aa). A CR-type zinc finger spans residues 130 to 208; sequence GTEVKIRVPS…CHGQGRVEEH (79 aa). Residues Cys-143, Cys-146, Cys-160, Cys-163, Cys-182, Cys-185, Cys-196, and Cys-199 each coordinate Zn(2+). CXXCXGXG motif repeat units lie at residues 143-150, 160-167, 182-189, and 196-203; these read CGECHGSG, CGTCGGVG, CPRCHGTG, and CKACHGQG.

It belongs to the DnaJ family. Homodimer. Zn(2+) is required as a cofactor.

Its subcellular location is the cytoplasm. In terms of biological role, participates actively in the response to hyperosmotic and heat shock by preventing the aggregation of stress-denatured proteins and by disaggregating proteins, also in an autonomous, DnaK-independent fashion. Unfolded proteins bind initially to DnaJ; upon interaction with the DnaJ-bound protein, DnaK hydrolyzes its bound ATP, resulting in the formation of a stable complex. GrpE releases ADP from DnaK; ATP binding to DnaK triggers the release of the substrate protein, thus completing the reaction cycle. Several rounds of ATP-dependent interactions between DnaJ, DnaK and GrpE are required for fully efficient folding. Also involved, together with DnaK and GrpE, in the DNA replication of plasmids through activation of initiation proteins. This is Chaperone protein DnaJ from Thioalkalivibrio sulfidiphilus (strain HL-EbGR7).